The sequence spans 343 residues: F17c-G fimbrial adhesin (343 aa).

The signal sequence occupies residues methionine 1–alanine 22. Positions alanine 23–valine 199 are receptor-binding lectin domain. A carbohydrate is bound by residues alanine 65 to asparagine 66, aspartate 110 to threonine 111, and serine 138 to glycine 141. Residues cysteine 75 and cysteine 132 are joined by a disulfide bond. The interval threonine 200 to glutamine 343 is fimbrillin-binding domain. Residues leucine 287–glycine 307 are disordered. The segment covering asparagine 298–glycine 307 has biased composition (polar residues).

This sequence belongs to the fimbrial protein family.

Its subcellular location is the fimbrium. Essential fimbrial adhesion factor that mediates binding to N-acetylglucosamine-containing receptors in the host intestinal microvilli, leading to colonization of the intestinal tissue, and diarrhea or septicemia. Also confers adhesiveness to laminin and basement membranes. This Escherichia coli protein is F17c-G fimbrial adhesin (f17cG).